The chain runs to 91 residues: Small ribosomal subunit protein bS18 (91 aa).

It belongs to the bacterial ribosomal protein bS18 family. As to quaternary structure, part of the 30S ribosomal subunit. Forms a tight heterodimer with protein bS6.

Functionally, binds as a heterodimer with protein bS6 to the central domain of the 16S rRNA, where it helps stabilize the platform of the 30S subunit. The chain is Small ribosomal subunit protein bS18 from Syntrophotalea carbinolica (strain DSM 2380 / NBRC 103641 / GraBd1) (Pelobacter carbinolicus).